A 239-amino-acid polypeptide reads, in one-letter code: Adenylate dimethylallyltransferase (239 aa).

Belongs to the isopentenyl transferase family.

The catalysed reaction is dimethylallyl diphosphate + AMP = N(6)-(dimethylallyl)adenosine 5'-phosphate + diphosphate. Transfers dimethylallyl groups to AMP as part of the biosynthesis of cytokinin phytohormones. This Rhizobium radiobacter (Agrobacterium tumefaciens) protein is Adenylate dimethylallyltransferase (ipt).